Here is a 566-residue protein sequence, read N- to C-terminus: Arginine--tRNA ligase (566 aa).

Positions Ala-121–His-131 match the 'HIGH' region motif.

This sequence belongs to the class-I aminoacyl-tRNA synthetase family.

The protein localises to the cytoplasm. The catalysed reaction is tRNA(Arg) + L-arginine + ATP = L-arginyl-tRNA(Arg) + AMP + diphosphate. The polypeptide is Arginine--tRNA ligase (Methanococcus maripaludis (strain DSM 14266 / JCM 13030 / NBRC 101832 / S2 / LL)).